The chain runs to 407 residues: MKRTFIMVLDSFGIGASKDAEKFGDQGSNTLGHIAEACARGDADIGRKGPLYLPNLSRLGLGKATEESCGTFPAGLDKDADIIGAYAYASELSSGKDTPSGHWEIAGVPVLFDWGYFKDEENSFPQALLDKLVERANLPGYLGNCHSSGTVILDKLGEEHMKTGKPIFYTSADSVFQIACHEETFGLDRLYELCEIAREELTDGGYNIGRVIARPFVGDKAGNFQRTGNRHDLAVEPPAPTILKKLVDEKNGEVVSIGKIADIYANVGITQKVKATGIDALFDATLVEMEKAGDNTIVFTNFVDFDSSYGHRRDVPGYAAALELFDRRLPEMLKRVKNDDILILTADHGCDPTWSGTDHTREHIPVLIYGPKVQPGSLGHRETFADIGQTVAKYFELSPMEYGKSML.

Positions 10, 306, 311, 347, 348, and 359 each coordinate Mn(2+).

The protein belongs to the phosphopentomutase family. The cofactor is Mn(2+).

The protein localises to the cytoplasm. It carries out the reaction 2-deoxy-alpha-D-ribose 1-phosphate = 2-deoxy-D-ribose 5-phosphate. It catalyses the reaction alpha-D-ribose 1-phosphate = D-ribose 5-phosphate. The protein operates within carbohydrate degradation; 2-deoxy-D-ribose 1-phosphate degradation; D-glyceraldehyde 3-phosphate and acetaldehyde from 2-deoxy-alpha-D-ribose 1-phosphate: step 1/2. Its function is as follows. Isomerase that catalyzes the conversion of deoxy-ribose 1-phosphate (dRib-1-P) and ribose 1-phosphate (Rib-1-P) to deoxy-ribose 5-phosphate (dRib-5-P) and ribose 5-phosphate (Rib-5-P), respectively. In Photorhabdus laumondii subsp. laumondii (strain DSM 15139 / CIP 105565 / TT01) (Photorhabdus luminescens subsp. laumondii), this protein is Phosphopentomutase.